Reading from the N-terminus, the 318-residue chain is Glycerol 2-dehydrogenase (NADP(+)) (318 aa).

The active-site Proton donor is Y52. Residue H115 participates in substrate binding. An NADP(+)-binding site is contributed by 217–277; the sequence is SPLGSQNQVP…SSTPSRIESN (61 aa).

This sequence belongs to the aldo/keto reductase family.

It carries out the reaction glycerol + NADP(+) = dihydroxyacetone + NADPH + H(+). Functionally, glycerol oxidoreductase probably involved in glycerol synthesis. This is Glycerol 2-dehydrogenase (NADP(+)) (gld2) from Hypocrea jecorina (Trichoderma reesei).